Consider the following 150-residue polypeptide: Transcriptional regulator MraZ (150 aa).

SpoVT-AbrB domains are found at residues 7–55 and 84–127; these read SHAI…PEPE and AALM…SEES.

It belongs to the MraZ family. As to quaternary structure, forms oligomers.

It is found in the cytoplasm. It localises to the nucleoid. This chain is Transcriptional regulator MraZ, found in Marinobacter nauticus (strain ATCC 700491 / DSM 11845 / VT8) (Marinobacter aquaeolei).